We begin with the raw amino-acid sequence, 294 residues long: N-acetylmuramic acid 6-phosphate etherase (294 aa).

Residues 56–219 enclose the SIS domain; it reads TSYSLKNGGR…STLSMVSVGK (164 aa). Residue Glu84 is the Proton donor of the active site. The active site involves Glu115.

It belongs to the GCKR-like family. MurNAc-6-P etherase subfamily. As to quaternary structure, homodimer.

The catalysed reaction is N-acetyl-D-muramate 6-phosphate + H2O = N-acetyl-D-glucosamine 6-phosphate + (R)-lactate. It functions in the pathway amino-sugar metabolism; 1,6-anhydro-N-acetylmuramate degradation. The protein operates within amino-sugar metabolism; N-acetylmuramate degradation. It participates in cell wall biogenesis; peptidoglycan recycling. Its function is as follows. Specifically catalyzes the cleavage of the D-lactyl ether substituent of MurNAc 6-phosphate, producing GlcNAc 6-phosphate and D-lactate. Together with AnmK, is also required for the utilization of anhydro-N-acetylmuramic acid (anhMurNAc) either imported from the medium or derived from its own cell wall murein, and thus plays a role in cell wall recycling. The chain is N-acetylmuramic acid 6-phosphate etherase from Francisella tularensis subsp. novicida (strain U112).